The chain runs to 426 residues: MRKWIAAAGLAYVLYGLFFYWYFFLSGDSAIPEAVKGTQADPASFMKPSELAVAEQYSNVKNFLFFIGVPLDWFLFFVLLVSGVSKKIKKWIEAAVPFRFLQTVGFVFVLSLITTLVTLPLDWIGYQVSLDYNISTQTTASWAKDQVISFWISFPIFTLCVLVFYWLIKRHEKKWWLYAWLLTVPFSLFLFFIQPVIIDPLYNDFYPLKNKELESKILELADEANIPADHVYEVNMSEKTNALNAYVTGIGANKRIVLWDTTLNKLDDSEILFIMGHEMGHYVMKHVYIGLAGYLLVSLAGFYVIDKLYKRTVRLTRSMFHLEGRHDLAALPLLLLLFSVLSFAVTPFSNAVSRYQENKADQYGIELTENREAAVKTFQDLAVTGLSQVDPPVLVKIFRGSHPSIMERIQHAEKEENAPEHQDADK.

Residue H277 participates in Zn(2+) binding. The active site involves E278. Zn(2+) is bound by residues H281 and E357.

This sequence belongs to the peptidase M48B family. It depends on Zn(2+) as a cofactor.

This is an uncharacterized protein from Bacillus subtilis (strain 168).